The following is a 213-amino-acid chain: Motile sperm domain-containing protein 1 (213 aa).

Positions 16 to 143 (PVFVFPTELI…KEHLTESLFF (128 aa)) constitute an MSP domain. The next 2 membrane-spanning stretches (helical) occupy residues 159-179 (SLLT…PTLG) and 191-211 (LSVN…MAIL). A Nuclear export signal motif is present at residues 205–208 (LITM).

The protein resides in the endoplasmic reticulum membrane. It localises to the golgi apparatus membrane. Its function is as follows. Plays a role in differentiation and/or proliferation of mesenchymal stem cells. Proposed to be involved in epithelial-to-mesenchymal transition (EMT). However, another study suggests that it is not required for EMT or stem cell self-renewal and acts during later stages of differentiation. The sequence is that of Motile sperm domain-containing protein 1 (MOSPD1) from Pongo abelii (Sumatran orangutan).